Here is a 159-residue protein sequence, read N- to C-terminus: MKCTLVSTLFAITNILVAHAQVSNSSDTLDVQFANSTNSYIEGKFNSTDEAFNSSASWSLAAQQKKISNAAVYDVGGWNGSLYRSNRSAVADHQPGKKQDAAISQISDGQIQATASGPETTAATTPSSTANVSVYEGAGMKVESKNMGYIVGVAALLFL.

The signal sequence occupies residues 1-20 (MKCTLVSTLFAITNILVAHA). A PIR1/2/3 repeat occupies 101 to 114 (AAISQISDGQIQAT). A lipid anchor (GPI-anchor amidated glycine) is attached at glycine 137. Residues 138–159 (AGMKVESKNMGYIVGVAALLFL) constitute a propeptide, removed in mature form.

The protein localises to the cell membrane. The protein is Probable GPI-anchored protein ANS1 (ANS1) of Saccharomyces cerevisiae (strain ATCC 204508 / S288c) (Baker's yeast).